Reading from the N-terminus, the 592-residue chain is Frizzled-1 (592 aa).

The segment at 1 to 26 (MAERRGPAGGGSGEVGGGRRAGGDRC) is disordered. The signal sequence occupies residues 1–48 (MAERRGPAGGGSGEVGGGRRAGGDRCPRRPPALPLLLLLWAAALPAGG). Residues 7 to 20 (PAGGGSGEVGGGRR) show a composition bias toward gly residues. Over 49-271 (QPAAQPAALS…PEELRFSRTW (223 aa)) the chain is Extracellular. Residues 65-184 (PDHGYCQPIS…HGAGELCVGQ (120 aa)) enclose the FZ domain. Intrachain disulfides connect Cys-70–Cys-131, Cys-78–Cys-124, Cys-115–Cys-152, Cys-141–Cys-181, and Cys-145–Cys-169. An N-linked (GlcNAc...) asparagine glycan is attached at Asn-84. Asn-185 carries an N-linked (GlcNAc...) asparagine glycan. The disordered stretch occupies residues 185–219 (NASERGTPTPALRPESWTSNPHRGGGAGGSGPGEA). Residues 207–218 (RGGGAGGSGPGE) show a composition bias toward gly residues. A helical transmembrane segment spans residues 272–292 (IGIWSVLCCASTLFTVLTYLV). Residues 293-303 (DMKRFSYPERP) lie on the Cytoplasmic side of the membrane. The helical transmembrane segment at 304 to 324 (IIFLSGCYTAVAVAYIAGFLL) threads the bilayer. Over 325-351 (EERVVCNERFAEDGSRTVAQGTKREGC) the chain is Extracellular. Residues 352-372 (TILFMMLYFFGMASSIWWVIL) form a helical membrane-spanning segment. Topologically, residues 373–394 (SLTWFLAAGMKWGHEAIEANSQ) are cytoplasmic. The helical transmembrane segment at 395-415 (YFHLAAWAVPAIKTITILALG) threads the bilayer. The Extracellular segment spans residues 416-438 (QVDGDVLSGVCFVGINNVDALRG). A helical membrane pass occupies residues 439 to 459 (FVLAPLFVYLFIGTSFLLAGF). The Cytoplasmic portion of the chain corresponds to 460–485 (VSLFRIRTIMKHDGTKTEKLEKLMVR). Residues 486–506 (IGIFSVLYTVPATIVIACYFY) traverse the membrane as a helical segment. Over 507–546 (EQAFREQWERSWVTQSCKSYAIPCPNNHSSHHPPMSPDFT) the chain is Extracellular. The N-linked (GlcNAc...) asparagine glycan is linked to Asn-533. The chain crosses the membrane as a helical span at residues 547–567 (VFMIKYLMTLIVGITSGFWIW). Topologically, residues 568–592 (SGKTLNSWRKFYTRLTNSKQGETTV) are cytoplasmic. Residues 570-575 (KTLNSW) carry the Lys-Thr-X-X-X-Trp motif, mediates interaction with the PDZ domain of Dvl family members motif. Residues 590–592 (TTV) carry the PDZ-binding motif.

It belongs to the G-protein coupled receptor Fz/Smo family. Expressed in the lens, otic placode (medial wall of the vesicle) and in epibranchial placode. Also expressed in the developing somites (dermomyotome).

The protein resides in the cell membrane. Receptor for Wnt proteins. Functions in the canonical Wnt/beta-catenin signaling pathway. The canonical Wnt/beta-catenin signaling pathway leads to the activation of disheveled proteins, inhibition of GSK-3 kinase, nuclear accumulation of beta-catenin and activation of Wnt target genes. A second signaling pathway involving PKC and calcium fluxes has been seen for some family members, but it is not yet clear if it represents a distinct pathway or if it can be integrated in the canonical pathway, as PKC seems to be required for Wnt-mediated inactivation of GSK-3 kinase. Both pathways seem to involve interactions with G-proteins. May be involved in transduction and intercellular transmission of polarity information during tissue morphogenesis and/or in differentiated tissues. This is Frizzled-1 (FZD1) from Gallus gallus (Chicken).